A 197-amino-acid polypeptide reads, in one-letter code: Ribonuclease HII (197 aa).

The 191-residue stretch at 7–197 folds into the RNase H type-2 domain; it reads LGIAGVDEVG…SFLRKLFATV (191 aa). Positions 13, 14, and 109 each coordinate a divalent metal cation.

It belongs to the RNase HII family. It depends on Mn(2+) as a cofactor. Mg(2+) serves as cofactor.

The protein localises to the cytoplasm. It carries out the reaction Endonucleolytic cleavage to 5'-phosphomonoester.. In terms of biological role, endonuclease that specifically degrades the RNA of RNA-DNA hybrids. In Synechococcus sp. (strain CC9311), this protein is Ribonuclease HII.